The sequence spans 638 residues: Phosphomethylpyrimidine synthase (638 aa).

Residues N243, M272, Y301, H337, 357 to 359 (SRG), 398 to 401 (DGLR), and E437 contribute to the substrate site. A Zn(2+)-binding site is contributed by H441. Position 464 (Y464) interacts with substrate. H505 contacts Zn(2+). [4Fe-4S] cluster contacts are provided by C585, C588, and C593.

The protein belongs to the ThiC family. In terms of assembly, homodimer. [4Fe-4S] cluster is required as a cofactor.

It catalyses the reaction 5-amino-1-(5-phospho-beta-D-ribosyl)imidazole + S-adenosyl-L-methionine = 4-amino-2-methyl-5-(phosphooxymethyl)pyrimidine + CO + 5'-deoxyadenosine + formate + L-methionine + 3 H(+). Its pathway is cofactor biosynthesis; thiamine diphosphate biosynthesis. In terms of biological role, catalyzes the synthesis of the hydroxymethylpyrimidine phosphate (HMP-P) moiety of thiamine from aminoimidazole ribotide (AIR) in a radical S-adenosyl-L-methionine (SAM)-dependent reaction. This is Phosphomethylpyrimidine synthase from Aromatoleum aromaticum (strain DSM 19018 / LMG 30748 / EbN1) (Azoarcus sp. (strain EbN1)).